Here is a 255-residue protein sequence, read N- to C-terminus: 5'-nucleotidase SurE (255 aa).

A divalent metal cation-binding residues include aspartate 8, aspartate 9, serine 40, and asparagine 93.

It belongs to the SurE nucleotidase family. The cofactor is a divalent metal cation.

It localises to the cytoplasm. The catalysed reaction is a ribonucleoside 5'-phosphate + H2O = a ribonucleoside + phosphate. Nucleotidase that shows phosphatase activity on nucleoside 5'-monophosphates. In Rhodopseudomonas palustris (strain HaA2), this protein is 5'-nucleotidase SurE.